A 235-amino-acid chain; its full sequence is High affinity immunoglobulin epsilon receptor subunit beta (235 aa).

The disordered stretch occupies residues 1 to 23 (MDTENRSRADLALPNPQESSSAP). Residues 1-51 (MDTENRSRADLALPNPQESSSAPDIELLEASPAKAAPPKQTWRTFLKKELE) lie on the Cytoplasmic side of the membrane. A helical membrane pass occupies residues 52–71 (FLGATQILVGLICLCFGTIV). Residues 72 to 89 (CSVLYVSDFDEEVLLLYK) are Extracellular-facing. Residues 90–109 (LGYPFWGAVLFVLSGFLSII) form a helical membrane-spanning segment. Over 110–122 (SERKNTLYLVRGS) the chain is Cytoplasmic. A helical transmembrane segment spans residues 123–142 (LGANIVSSIAAGTGIAMLIL). Topologically, residues 143 to 171 (NLTNNFAYMNNCKNVTEDDGCFVASFTTE) are extracellular. Residues 172 to 191 (LVLMMLFLTILAFCSAVLFT) traverse the membrane as a helical segment. Residues 192 to 235 (IYRIGQELESKKVPDDRLYEELNVYSPIYSELEDKGETSSPVDS) are Cytoplasmic-facing. Residues Tyr210 and Tyr216 each carry the phosphotyrosine modification. The residue at position 217 (Ser217) is a Phosphoserine. Tyr220 carries the post-translational modification Phosphotyrosine.

It belongs to the MS4A family. Tetramer of an alpha chain, a beta chain, and two disulfide linked gamma chains. Binds LILRB1. Interacts with FGR. Interacts with FGR and FES/FPS. Interacts with LYN. Post-translationally, phosphorylated on tyrosine residues by LYN.

The protein localises to the membrane. High affinity receptor that binds to the Fc region of immunoglobulins epsilon. Aggregation of FCER1 by multivalent antigens is required for the full mast cell response, including the release of preformed mediators (such as histamine) by degranulation and de novo production of lipid mediators and cytokines. Also mediates the secretion of important lymphokines. Binding of allergen to receptor-bound IgE leads to cell activation and the release of mediators responsible for the manifestations of allergy. The protein is High affinity immunoglobulin epsilon receptor subunit beta (Ms4a2) of Mus musculus (Mouse).